The chain runs to 699 residues: Probable xyloglucan glycosyltransferase 12 (699 aa).

The next 2 membrane-spanning stretches (helical) occupy residues 126-146 (CLKV…AAYF) and 194-214 (IVLF…CFWI). The active site involves D280. Substrate contacts are provided by D339 and D341. Residue D433 is part of the active site. Transmembrane regions (helical) follow at residues 511–531 (LILP…TMFV) and 536–556 (LPAW…ILPA). Residues 616 to 646 (EKTTKHQRGVSAPETEAEKKAEKTKRKKKKH) are disordered. Glycyl lysine isopeptide (Lys-Gly) (interchain with G-Cter in ubiquitin) cross-links involve residues K617 and K620. S626 bears the Phosphoserine mark. Over residues 637–646 (EKTKRKKKKH) the composition is skewed to basic residues. 2 helical membrane-spanning segments follow: residues 649–668 (IYMK…TRSL) and 674–694 (IHFY…LDLI).

It belongs to the glycosyltransferase 2 family. Plant cellulose synthase-like C subfamily. As to quaternary structure, homodimer. Mainly expressed in roots, flowers and seeds, and, at very low levels, in seedlings, leaves and stems.

It is found in the golgi apparatus membrane. Functionally, probable beta-1,4-glucan synthase rather involved in the synthesis of the xyloglucan backbone than cellulose. Seems to work simultaneously with xyloglucan 6-xylosyltransferase. Xyloglucan is a noncellulosic polysaccharides of plant cell wall and consists of a glucan backbone substituted by xylose, galactose and fucose. In Arabidopsis thaliana (Mouse-ear cress), this protein is Probable xyloglucan glycosyltransferase 12.